The following is a 77-amino-acid chain: RNA-binding protein Hfq (77 aa).

The Sm domain maps to 9–68 (DPFLNALRKEHIPVAIYLVNGIKLQGQIESFDQFVILLKNTVSQMVYKHAISTVVPARAI).

Belongs to the Hfq family. In terms of assembly, homohexamer.

Functionally, RNA chaperone that binds small regulatory RNA (sRNAs) and mRNAs to facilitate mRNA translational regulation in response to envelope stress, environmental stress and changes in metabolite concentrations. Also binds with high specificity to tRNAs. This chain is RNA-binding protein Hfq, found in Psychromonas ingrahamii (strain DSM 17664 / CCUG 51855 / 37).